Consider the following 315-residue polypeptide: Thymidylate synthase (315 aa).

Residues Arg-29 and 156 to 157 (RR) each bind dUMP. Cys-176 functions as the Nucleophile in the catalytic mechanism. DUMP is bound by residues 213-216 (RSCD), Asn-224, and 254-256 (HVY). Asp-216 provides a ligand contact to (6R)-5,10-methylene-5,6,7,8-tetrahydrofolate.

The protein belongs to the thymidylate synthase family. As to quaternary structure, homodimer.

The catalysed reaction is dUMP + (6R)-5,10-methylene-5,6,7,8-tetrahydrofolate = 7,8-dihydrofolate + dTMP. It functions in the pathway pyrimidine metabolism; dTTP biosynthesis. The polypeptide is Thymidylate synthase (TMP1) (Candida albicans (strain SC5314 / ATCC MYA-2876) (Yeast)).